We begin with the raw amino-acid sequence, 350 residues long: Ferredoxin--NADP reductase (350 aa).

Residues T22, E41, Q49, Y54, V94, F129, D295, and S336 each contribute to the FAD site.

This sequence belongs to the ferredoxin--NADP reductase type 2 family. Homodimer. The cofactor is FAD.

It catalyses the reaction 2 reduced [2Fe-2S]-[ferredoxin] + NADP(+) + H(+) = 2 oxidized [2Fe-2S]-[ferredoxin] + NADPH. This chain is Ferredoxin--NADP reductase, found in Chlorobium luteolum (strain DSM 273 / BCRC 81028 / 2530) (Pelodictyon luteolum).